The following is a 113-amino-acid chain: Histidine triad nucleotide-binding protein (113 aa).

Zn(2+) is bound by residues Cys5 and Cys8. The 108-residue stretch at Ile6–Leu113 folds into the HIT domain. Asp31 provides a ligand contact to AMP. His47 is a Zn(2+) binding site. Asn86, Gly92, and Thr94 together coordinate AMP. Residue His97 coordinates Zn(2+). The Histidine triad motif signature appears at His97–His101. AMP contacts are provided by His99 and His101. Catalysis depends on His99, which acts as the Tele-AMP-histidine intermediate.

It belongs to the HINT family.

It localises to the nucleus. The protein localises to the cytoplasm. The enzyme catalyses adenosine 5'-phosphoramidate + H2O = AMP + NH4(+). Its function is as follows. Hydrolyzes purine nucleotide phosphoramidates with a single phosphate group, including adenosine 5'monophosphoramidate (AMP-NH2), adenosine 5'monophosphomorpholidate (AMP-morpholidate) and guanosine 5'monophosphomorpholidate (GMP-morpholidate). Hydrolyzes lysyl-AMP (AMP-N-epsilon-(N-alpha-acetyl lysine methyl ester)) generated by lysine tRNA ligase, as well as Met-AMP, His-AMP and Asp-AMP, lysyl-GMP (GMP-N-epsilon-(N-alpha-acetyl lysine methyl ester)) and AMP-N-alanine methyl ester. May also function as scaffolding protein that mediates protein-protein interactions. This Entamoeba histolytica (strain ATCC 30459 / HM-1:IMSS / ABRM) protein is Histidine triad nucleotide-binding protein.